A 260-amino-acid chain; its full sequence is Oxidoreductase macE (260 aa).

Belongs to the oxidoreductase OpS7 family.

Its pathway is secondary metabolite biosynthesis; terpenoid biosynthesis. Functionally, oxidoreductase; part of the gene cluster that mediates the biosynthesis of macrophorins, isoprenoid epoxycyclohexenones containing cyclized drimane moieties. The first step of the pathway is the synthesis of 6-methylsalicylic acid (6-MSA) by the polyketide synthase macA. 6-MSA is then converted to m-cresol by the decarboxylase macB. The cytochrome P450 monooxygenase macC then catalyzes the oxidation of m-cresol to toluquinol. Epoxidation of toluquinol is then performed by the short chain dehydrogenase macD, with the help of macE, and a further prenylation by macG leads to 7-deacetoxyyanuthone A. The next step is the hydroxylation of C-22 of 7-deacetoxyyanuthone A by the cytochrome P450 monooxygenase macH to yield 22-deacetylyanuthone A. O-Mevalon transferase macI then attaches mevalon to the hydroxyl group of 22-deacetylyanuthone A to produce yanuthone E. The terpene cyclase macJ catalyzes the cyclization of 22-deacetylyanuthone A to macrophorin A. MacJ is also able to catalyze cyclization of yanuthone E and 7-deacetoxyyanuthone A to their corresponding macrophorins. The macJ products can be further modified by macH and macJ, as well as by the FAD-dependent monooxygenase macF, to produce additional macrophorins, including 4'-oxomacrophorin A, 4'-oxomacrophorin D and 4'-oxomacrophorin E. The protein is Oxidoreductase macE of Penicillium terrestre.